The following is a 201-amino-acid chain: Holliday junction resolvase RecU (201 aa).

Thr-85, Asp-87, Glu-100, and Gln-119 together coordinate Mg(2+).

It belongs to the RecU family. The cofactor is Mg(2+).

The protein resides in the cytoplasm. It carries out the reaction Endonucleolytic cleavage at a junction such as a reciprocal single-stranded crossover between two homologous DNA duplexes (Holliday junction).. Functionally, endonuclease that resolves Holliday junction intermediates in genetic recombination. Cleaves mobile four-strand junctions by introducing symmetrical nicks in paired strands. Promotes annealing of linear ssDNA with homologous dsDNA. Required for DNA repair, homologous recombination and chromosome segregation. This Geobacillus thermodenitrificans (strain NG80-2) protein is Holliday junction resolvase RecU.